The sequence spans 163 residues: uncharacterized protein (163 aa).

Residues 136-161 (QKYIENHQKEINEHVEKLRTLHKELR) are a coiled coil.

This is an uncharacterized protein from Acanthamoeba polyphaga (Amoeba).